Consider the following 485-residue polypeptide: NADH-quinone oxidoreductase subunit N (485 aa).

The next 14 helical transmembrane spans lie at 3–23 (LFMPEIIILITALLVIITDLF), 30–50 (HLAYLSLLGLGAAAVATVLNW), 67–87 (YASFFRILFISLSGLVIMASV), 96–116 (FQGEYYALVLLALLGMIMMAS), 120–140 (LITMYLSLELAGLAFYVLVGF), 154–174 (LLLGGVASAMLVFGLVLIYGF), 202–222 (FILGIILTITGLGFKVAAVPF), 247–267 (AAGFALFLRLFYTVFTDPLAL), 271–291 (WALIVAVLATAGMTLGNVLAI), 299–319 (MLGYSSIAHAGYILVALAAVG), 332–352 (LFYLVAFAVSDLVAFVSIIAI), 375–395 (ASALTLALLSLTGFPPLAGFL), 411–431 (WLMIVAAVNTVISAVFYFNVI), and 453–473 (LALGISGLAVLIFGIIPETLL).

Belongs to the complex I subunit 2 family. As to quaternary structure, NDH-1 is composed of 14 different subunits. Subunits NuoA, H, J, K, L, M, N constitute the membrane sector of the complex.

Its subcellular location is the cell membrane. It catalyses the reaction a quinone + NADH + 5 H(+)(in) = a quinol + NAD(+) + 4 H(+)(out). NDH-1 shuttles electrons from NADH, via FMN and iron-sulfur (Fe-S) centers, to quinones in the respiratory chain. The immediate electron acceptor for the enzyme in this species is believed to be ubiquinone. Couples the redox reaction to proton translocation (for every two electrons transferred, four hydrogen ions are translocated across the cytoplasmic membrane), and thus conserves the redox energy in a proton gradient. The polypeptide is NADH-quinone oxidoreductase subunit N (Dehalococcoides mccartyi (strain ATCC BAA-2100 / JCM 16839 / KCTC 5957 / BAV1)).